The following is a 530-amino-acid chain: ATP-dependent 6-phosphofructokinase 4, chloroplastic (530 aa).

The N-terminal 54 residues, 1–54 (MEASISFLGSTKPNISLFNPSSNVLPRRDFPLPALKLKKVSVLPRILHQKRLIR), are a transit peptide targeting the chloroplast. Ser121 is modified (phosphoserine). Residues Gly152, 215–216 (RG), and 240–243 (GGGT) contribute to the ATP site. Residues 269-271 (TID), 314-316 (MGR), Glu370, and 427-430 (YMIR) each bind substrate. Asp271 serves as the catalytic Proton acceptor.

This sequence belongs to the phosphofructokinase type A (PFKA) family. PPi-dependent PFK group II subfamily. Atypical ATP-dependent clade 'X' sub-subfamily. In terms of assembly, homotetramer. It depends on Mg(2+) as a cofactor. In terms of tissue distribution, expressed in leaves, stems and flowers.

The protein localises to the plastid. Its subcellular location is the chloroplast. The catalysed reaction is beta-D-fructose 6-phosphate + ATP = beta-D-fructose 1,6-bisphosphate + ADP + H(+). The protein operates within carbohydrate degradation; glycolysis; D-glyceraldehyde 3-phosphate and glycerone phosphate from D-glucose: step 3/4. With respect to regulation, allosterically activated by AMP. Its function is as follows. Catalyzes the phosphorylation of D-fructose 6-phosphate to fructose 1,6-bisphosphate by ATP, the first committing step of glycolysis. This is ATP-dependent 6-phosphofructokinase 4, chloroplastic from Arabidopsis thaliana (Mouse-ear cress).